A 201-amino-acid chain; its full sequence is Orotate phosphoribosyltransferase (201 aa).

Residues Lys90 and 113–121 (EDIITTGGS) contribute to the 5-phospho-alpha-D-ribose 1-diphosphate site. Residues Thr117 and Arg145 each contribute to the orotate site.

This sequence belongs to the purine/pyrimidine phosphoribosyltransferase family. PyrE subfamily. As to quaternary structure, homodimer. Mg(2+) serves as cofactor.

It catalyses the reaction orotidine 5'-phosphate + diphosphate = orotate + 5-phospho-alpha-D-ribose 1-diphosphate. It functions in the pathway pyrimidine metabolism; UMP biosynthesis via de novo pathway; UMP from orotate: step 1/2. Its function is as follows. Catalyzes the transfer of a ribosyl phosphate group from 5-phosphoribose 1-diphosphate to orotate, leading to the formation of orotidine monophosphate (OMP). In Sulfurovum sp. (strain NBC37-1), this protein is Orotate phosphoribosyltransferase.